The following is a 324-amino-acid chain: Envelope protein H3 (324 aa).

At 1 to 284 (MAAVKTPVIV…FTTPLISFFG (284 aa)) the chain is on the virion surface side. The chain crosses the membrane as a helical; Signal-anchor span at residues 285 to 305 (LFDINVIGLIVILFIMFMLIF). Over 306–324 (NVKSKLLWFLTGTFVTAFI) the chain is Intravirion.

The protein belongs to the orthopoxvirus OPG108 family. Does not contain disulfide bonds.

The protein localises to the virion membrane. Its function is as follows. Envelope protein that binds to heparan sulfate on the cell surface and might provide virion attachment to target cell. The sequence is that of Envelope protein H3 (OPG108) from Homo sapiens (Human).